The sequence spans 270 residues: Cyclic pyranopterin monophosphate synthase, mitochondrial (270 aa).

The N-terminal 32 residues, 1–32 (MISTLRRAVFLRRFPAVVSPIKRAFSSRIDDE), are a transit peptide targeting the mitochondrion. Residues 187 to 189 (LCH) and 225 to 226 (ME) each bind substrate. The active site involves Asp-240.

Belongs to the MoaC family. Homohexamer. In terms of tissue distribution, abundantly expressed in the roots.

It localises to the mitochondrion matrix. The enzyme catalyses (8S)-3',8-cyclo-7,8-dihydroguanosine 5'-triphosphate = cyclic pyranopterin phosphate + diphosphate. Its pathway is cofactor biosynthesis; molybdopterin biosynthesis. In terms of biological role, catalyzes the conversion of (8S)-3',8-cyclo-7,8-dihydroguanosine 5'-triphosphate to cyclic pyranopterin monophosphate (cPMP). This chain is Cyclic pyranopterin monophosphate synthase, mitochondrial (CNX3), found in Arabidopsis thaliana (Mouse-ear cress).